We begin with the raw amino-acid sequence, 130 residues long: Small ribosomal subunit protein uS9 (130 aa).

Belongs to the universal ribosomal protein uS9 family.

This is Small ribosomal subunit protein uS9 from Shewanella denitrificans (strain OS217 / ATCC BAA-1090 / DSM 15013).